We begin with the raw amino-acid sequence, 401 residues long: ATP phosphoribosyltransferase regulatory subunit (401 aa).

The protein belongs to the class-II aminoacyl-tRNA synthetase family. HisZ subfamily. In terms of assembly, heteromultimer composed of HisG and HisZ subunits.

It localises to the cytoplasm. It participates in amino-acid biosynthesis; L-histidine biosynthesis; L-histidine from 5-phospho-alpha-D-ribose 1-diphosphate: step 1/9. Its function is as follows. Required for the first step of histidine biosynthesis. May allow the feedback regulation of ATP phosphoribosyltransferase activity by histidine. The polypeptide is ATP phosphoribosyltransferase regulatory subunit (Cyanothece sp. (strain PCC 7425 / ATCC 29141)).